The following is a 216-amino-acid chain: MTTPVSFHPQAFIELALSRGVLKFGEFTLKSGRVSPYFFNAGLLNDGEALSLLAQGYADKLTQCENVDVIFGPAYKGIPFVAATAVALSQVHNKSVPWGFNRKEAKDHGEGGVLVGAAVEGKKVWIIDDVITAGTAIREVVTILKNAGATIAGVLVALDRQERGQGELSAIQEVQKELEIPVHALITMKDLMDYLEAKGEKEALANMQAYREKYGI.

Lys-30 is a 5-phospho-alpha-D-ribose 1-diphosphate binding site. 38–39 is a binding site for orotate; it reads FF. 5-phospho-alpha-D-ribose 1-diphosphate is bound by residues 75 to 76, Arg-102, Lys-103, Lys-106, His-108, and 128 to 136; these read YK and DDVITAGTA. The orotate site is built by Thr-132 and Arg-160.

The protein belongs to the purine/pyrimidine phosphoribosyltransferase family. PyrE subfamily. As to quaternary structure, homodimer. The cofactor is Mg(2+).

The catalysed reaction is orotidine 5'-phosphate + diphosphate = orotate + 5-phospho-alpha-D-ribose 1-diphosphate. It functions in the pathway pyrimidine metabolism; UMP biosynthesis via de novo pathway; UMP from orotate: step 1/2. Its function is as follows. Catalyzes the transfer of a ribosyl phosphate group from 5-phosphoribose 1-diphosphate to orotate, leading to the formation of orotidine monophosphate (OMP). The chain is Orotate phosphoribosyltransferase from Acinetobacter baumannii (strain ATCC 17978 / DSM 105126 / CIP 53.77 / LMG 1025 / NCDC KC755 / 5377).